The primary structure comprises 199 residues: Probable chemoreceptor glutamine deamidase CheD (199 aa).

This sequence belongs to the CheD family.

The catalysed reaction is L-glutaminyl-[protein] + H2O = L-glutamyl-[protein] + NH4(+). In terms of biological role, probably deamidates glutamine residues to glutamate on methyl-accepting chemotaxis receptors (MCPs), playing an important role in chemotaxis. This chain is Probable chemoreceptor glutamine deamidase CheD, found in Cereibacter sphaeroides (strain ATCC 17025 / ATH 2.4.3) (Rhodobacter sphaeroides).